The following is a 353-amino-acid chain: Photosystem II protein D1 (353 aa).

Thr-2 bears the N-acetylthreonine mark. At Thr-2 the chain carries Phosphothreonine. Helical transmembrane passes span 29–46 (YIGWFGVLMIPTLLTATS), 118–133 (HFLLGVACYMGREWEL), and 142–156 (WIAVAYSAPVAAATA). His-118 contacts chlorophyll a. Pheophytin a is bound at residue Tyr-126. Positions 170 and 189 each coordinate [CaMn4O5] cluster. The helical transmembrane segment at 197 to 218 (FHMLGVAGVFGGSLFSAMHGSL) threads the bilayer. His-198 contributes to the chlorophyll a binding site. His-215 contributes to the a quinone binding site. Residues His-215 and His-272 each contribute to the Fe cation site. Residues 274–288 (FLAAWPVVGIWFTAL) traverse the membrane as a helical segment. [CaMn4O5] cluster is bound by residues His-332, Glu-333, Asp-342, and Ala-344. Positions 345–353 (AVEAPSING) are excised as a propeptide.

Belongs to the reaction center PufL/M/PsbA/D family. As to quaternary structure, PSII is composed of 1 copy each of membrane proteins PsbA, PsbB, PsbC, PsbD, PsbE, PsbF, PsbH, PsbI, PsbJ, PsbK, PsbL, PsbM, PsbT, PsbX, PsbY, PsbZ, Psb30/Ycf12, at least 3 peripheral proteins of the oxygen-evolving complex and a large number of cofactors. It forms dimeric complexes. The D1/D2 heterodimer binds P680, chlorophylls that are the primary electron donor of PSII, and subsequent electron acceptors. It shares a non-heme iron and each subunit binds pheophytin, quinone, additional chlorophylls, carotenoids and lipids. D1 provides most of the ligands for the Mn4-Ca-O5 cluster of the oxygen-evolving complex (OEC). There is also a Cl(-1) ion associated with D1 and D2, which is required for oxygen evolution. The PSII complex binds additional chlorophylls, carotenoids and specific lipids. serves as cofactor. Tyr-161 forms a radical intermediate that is referred to as redox-active TyrZ, YZ or Y-Z. In terms of processing, C-terminally processed by CTPA; processing is essential to allow assembly of the oxygen-evolving complex and thus photosynthetic growth.

It is found in the plastid. Its subcellular location is the chloroplast thylakoid membrane. The enzyme catalyses 2 a plastoquinone + 4 hnu + 2 H2O = 2 a plastoquinol + O2. Functionally, photosystem II (PSII) is a light-driven water:plastoquinone oxidoreductase that uses light energy to abstract electrons from H(2)O, generating O(2) and a proton gradient subsequently used for ATP formation. It consists of a core antenna complex that captures photons, and an electron transfer chain that converts photonic excitation into a charge separation. The D1/D2 (PsbA/PsbD) reaction center heterodimer binds P680, the primary electron donor of PSII as well as several subsequent electron acceptors. This Brassica napus (Rape) protein is Photosystem II protein D1.